Consider the following 126-residue polypeptide: Large-conductance mechanosensitive channel (126 aa).

2 consecutive transmembrane segments (helical) span residues 14-34 (VLDLAVGVIIGGAFTGIVKSL) and 69-89 (GAFLNDVINFLITAFVVFLLV).

The protein belongs to the MscL family. Homopentamer.

The protein resides in the cell membrane. Its function is as follows. Channel that opens in response to stretch forces in the membrane lipid bilayer. May participate in the regulation of osmotic pressure changes within the cell. The chain is Large-conductance mechanosensitive channel from Leuconostoc citreum (strain KM20).